We begin with the raw amino-acid sequence, 70 residues long: DNA-directed RNA polymerase subunit epsilon (70 aa).

It belongs to the RNA polymerase subunit epsilon family. In terms of assembly, RNAP is composed of a core of 2 alpha, a beta and a beta' subunit. The core is associated with a delta subunit, and at least one of epsilon or omega. When a sigma factor is associated with the core the holoenzyme is formed, which can initiate transcription.

The enzyme catalyses RNA(n) + a ribonucleoside 5'-triphosphate = RNA(n+1) + diphosphate. Functionally, a non-essential component of RNA polymerase (RNAP). The protein is DNA-directed RNA polymerase subunit epsilon of Latilactobacillus sakei subsp. sakei (strain 23K) (Lactobacillus sakei subsp. sakei).